Reading from the N-terminus, the 220-residue chain is Deoxyribose-phosphate aldolase 1 (220 aa).

Aspartate 89 (proton donor/acceptor) is an active-site residue. Residue lysine 151 is the Schiff-base intermediate with acetaldehyde of the active site. Lysine 180 serves as the catalytic Proton donor/acceptor.

The protein belongs to the DeoC/FbaB aldolase family. DeoC type 1 subfamily.

It is found in the cytoplasm. The catalysed reaction is 2-deoxy-D-ribose 5-phosphate = D-glyceraldehyde 3-phosphate + acetaldehyde. The protein operates within carbohydrate degradation; 2-deoxy-D-ribose 1-phosphate degradation; D-glyceraldehyde 3-phosphate and acetaldehyde from 2-deoxy-alpha-D-ribose 1-phosphate: step 2/2. In terms of biological role, catalyzes a reversible aldol reaction between acetaldehyde and D-glyceraldehyde 3-phosphate to generate 2-deoxy-D-ribose 5-phosphate. The polypeptide is Deoxyribose-phosphate aldolase 1 (Staphylococcus aureus (strain COL)).